The following is a 557-amino-acid chain: Eukaryotic translation initiation factor 3 subunit D-2 (557 aa).

Residues 292–306 (QFDMLTVNETALEPP) are RNA gate. Positions 533-557 (FDSDNNDGEETSDDRPFLNSKDNKL) are disordered. The segment covering 545–557 (DDRPFLNSKDNKL) has biased composition (basic and acidic residues).

Belongs to the eIF-3 subunit D family. Component of the eukaryotic translation initiation factor 3 (eIF-3) complex. The eIF-3 complex interacts with pix.

It localises to the cytoplasm. In terms of biological role, mRNA cap-binding component of the eukaryotic translation initiation factor 3 (eIF-3) complex, which is involved in protein synthesis of a specialized repertoire of mRNAs and, together with other initiation factors, stimulates binding of mRNA and methionyl-tRNAi to the 40S ribosome. The eIF-3 complex specifically targets and initiates translation of a subset of mRNAs involved in cell proliferation. In the eIF-3 complex, eif3d specifically recognizes and binds the 7-methylguanosine cap of a subset of mRNAs. This Drosophila grimshawi (Hawaiian fruit fly) protein is Eukaryotic translation initiation factor 3 subunit D-2.